A 240-amino-acid polypeptide reads, in one-letter code: MATLFIADLHLCVEEPAITAGFLRFLAGEARKADALYILGDLFEAWIGDDDPNPLHHQMAAAIKAVSDSGVPCYFIHGNRDFLLGKRFARESGMTLLPEEKVLELYGRRVLIMHGDTLCTDDAGYQAFRAKVHKPWLQTLFLALPLFVRKRIAARMRANSKEANSSKSLAIMDVNQNAVVNAMEKHQVQWLIHGHTHRPAVHELIANQQPAFRVVLGAWHTEGSMVKVTADDVELIHFPF.

Mn(2+) is bound by residues Asp8, His10, Asp41, Asn79, and His114. 79–80 (NR) is a substrate binding site. Positions 122, 160, 164, 167, and 195 each coordinate substrate. Mn(2+) is bound by residues His195 and His197.

This sequence belongs to the LpxH family. Mn(2+) is required as a cofactor.

The protein resides in the cell inner membrane. It catalyses the reaction UDP-2-N,3-O-bis[(3R)-3-hydroxytetradecanoyl]-alpha-D-glucosamine + H2O = 2-N,3-O-bis[(3R)-3-hydroxytetradecanoyl]-alpha-D-glucosaminyl 1-phosphate + UMP + 2 H(+). It functions in the pathway glycolipid biosynthesis; lipid IV(A) biosynthesis; lipid IV(A) from (3R)-3-hydroxytetradecanoyl-[acyl-carrier-protein] and UDP-N-acetyl-alpha-D-glucosamine: step 4/6. Functionally, hydrolyzes the pyrophosphate bond of UDP-2,3-diacylglucosamine to yield 2,3-diacylglucosamine 1-phosphate (lipid X) and UMP by catalyzing the attack of water at the alpha-P atom. Involved in the biosynthesis of lipid A, a phosphorylated glycolipid that anchors the lipopolysaccharide to the outer membrane of the cell. The sequence is that of UDP-2,3-diacylglucosamine hydrolase from Escherichia coli O127:H6 (strain E2348/69 / EPEC).